A 297-amino-acid chain; its full sequence is Diaminopimelate epimerase (297 aa).

3 residues coordinate substrate: asparagine 13, glutamine 46, and asparagine 66. Residue cysteine 76 is the Proton donor of the active site. Substrate-binding positions include 77-78 (GN), asparagine 174, asparagine 207, and 225-226 (ER). Cysteine 234 (proton acceptor) is an active-site residue. Position 235-236 (235-236 (GT)) interacts with substrate.

This sequence belongs to the diaminopimelate epimerase family. In terms of assembly, homodimer.

It localises to the cytoplasm. The catalysed reaction is (2S,6S)-2,6-diaminopimelate = meso-2,6-diaminopimelate. The protein operates within amino-acid biosynthesis; L-lysine biosynthesis via DAP pathway; DL-2,6-diaminopimelate from LL-2,6-diaminopimelate: step 1/1. Functionally, catalyzes the stereoinversion of LL-2,6-diaminopimelate (L,L-DAP) to meso-diaminopimelate (meso-DAP), a precursor of L-lysine and an essential component of the bacterial peptidoglycan. The polypeptide is Diaminopimelate epimerase (Leptothrix cholodnii (strain ATCC 51168 / LMG 8142 / SP-6) (Leptothrix discophora (strain SP-6))).